Here is a 561-residue protein sequence, read N- to C-terminus: V-type proton ATPase catalytic subunit A (561 aa).

G190–T197 is an ATP binding site.

The protein belongs to the ATPase alpha/beta chains family. As to quaternary structure, V-ATPase is a heteromultimeric enzyme composed of a peripheral catalytic V1 complex (main components: subunits A, B, C, D, E, and F) attached to an integral membrane V0 proton pore complex (main component: the proteolipid protein). High expression in the mesocotyl tip of etiolated seedlings compared to the base.

It catalyses the reaction ATP + H2O + 4 H(+)(in) = ADP + phosphate + 5 H(+)(out). Functionally, catalytic subunit of the peripheral V1 complex of vacuolar ATPase. V-ATPase vacuolar ATPase is responsible for acidifying a variety of intracellular compartments in eukaryotic cells. This chain is V-type proton ATPase catalytic subunit A, found in Zea mays (Maize).